A 70-amino-acid polypeptide reads, in one-letter code: Conotoxin Cl9.1 (70 aa).

The signal sequence occupies residues 1-20 (MMGKLGVVLFICLVLFPLET). A propeptide spanning residues 21 to 50 (LQLEGGQQADRHVDQLEGNPNRETRTIEVR) is cleaved from the precursor. 3 cysteine pairs are disulfide-bonded: C51/C63, C56/C67, and C61/C70.

It belongs to the conotoxin M superfamily. Expressed by the venom duct.

Its subcellular location is the secreted. This chain is Conotoxin Cl9.1, found in Californiconus californicus (California cone).